We begin with the raw amino-acid sequence, 414 residues long: 11-beta-hydroxysteroid dehydrogenase type 2 (414 aa).

Helical transmembrane passes span 3–23, 26–46, 52–72, and 341–361; these read DFAV…GGAV, FLAF…ATLL, ALCM…WLYF, and YYAG…PLSI. Residues 382 to 414 are disordered; that stretch reads KQQGLSPNDNNNSIKENMNDSSSNNSNFTKCID. Positions 384-397 are enriched in polar residues; that stretch reads QGLSPNDNNNSIKE.

The protein belongs to the short-chain dehydrogenases/reductases (SDR) family. As to expression, broadly expressed in peripheral (brain, gill, eye, heart, liver, head kidney, posterior kidney, and gut).

It is found in the membrane. It carries out the reaction an 11beta-hydroxysteroid + NAD(+) = an 11-oxosteroid + NADH + H(+). The enzyme catalyses cortisol + NAD(+) = cortisone + NADH + H(+). It catalyses the reaction corticosterone + NAD(+) = 11-dehydrocorticosterone + NADH + H(+). The catalysed reaction is 11beta,17beta-dihydroxyandrost-4-ene-3-one + NAD(+) = 17beta-hydroxyandrost-4-ene-3,11-dione + NADH + H(+). It carries out the reaction 11beta-hydroxyandrost-4-ene-3,17-dione + NAD(+) = androst-4-ene-3,11,17-trione + NADH + H(+). Its pathway is steroid metabolism. Functionally, catalyzes the conversion of biologically active 11beta-hydroxyglucocorticoids (11beta-hydroxysteroid) such as cortisol, to inactive 11-ketoglucocorticoids (11-oxosteroid) such as cortisone, in the presence of NAD(+). Cortisol is the primary glucocorticoid in teleosts and is released to increase glucose bioavailability in order to meet the increased energy demands in response to stress. Functions as a dehydrogenase (oxidase), thereby decreasing the concentration of active glucocorticoids, regulating the hypothalamus-pituitary-interrenal (HPI) axis function in adult fish. Decreasing the excess glucocorticoids may be of relevance to brain function and neural proliferation. Plays a key role by catalyzing the oxidation of 11beta-hydroxytestosterone (11beta,17beta-dihydroxyandrost-4-ene-3-one) to 11-ketotestosterone (17beta-hydroxyandrost-4-ene-3,11-dione), the major fish androgen, that activates androgen receptor transcriptional activity. Catalyzes the conversion of 11beta-hydroxyandrostenedione (11beta-hydroxyandrost-4-ene-3,17-dione) to 11-ketoandrostenedione (androst-4-ene-3,11,17-trione), which can be further metabolized to 11-ketotestosterone. Exerts a dual role in fish by inactivating glucocorticoids and activating androgens. The polypeptide is 11-beta-hydroxysteroid dehydrogenase type 2 (hsd11b2) (Danio rerio (Zebrafish)).